The primary structure comprises 181 residues: uncharacterized protein (181 aa).

Belongs to the isochorismatase family.

This is an uncharacterized protein from Bacillus subtilis (strain 168).